The primary structure comprises 422 residues: Elongation factor 1-alpha (422 aa).

Residues Lys5–Ser221 form the tr-type G domain. Positions Gly14–Ser21 are G1. Gly14–Ser21 serves as a coordination point for GTP. Ser21 lines the Mg(2+) pocket. A G2 region spans residues Gly70 to Asp74. A G3 region spans residues Asp91 to Gly94. GTP-binding positions include Asp91–His95 and Asn146–Asp149. The G4 stretch occupies residues Asn146–Asp149. Residues Ser185–Phe187 are G5.

This sequence belongs to the TRAFAC class translation factor GTPase superfamily. Classic translation factor GTPase family. EF-Tu/EF-1A subfamily.

It localises to the cytoplasm. It carries out the reaction GTP + H2O = GDP + phosphate + H(+). In terms of biological role, GTP hydrolase that promotes the GTP-dependent binding of aminoacyl-tRNA to the A-site of ribosomes during protein biosynthesis. In Methanosarcina mazei (strain ATCC BAA-159 / DSM 3647 / Goe1 / Go1 / JCM 11833 / OCM 88) (Methanosarcina frisia), this protein is Elongation factor 1-alpha.